The sequence spans 268 residues: Probable chemotaxis protein methyltransferase (268 aa).

A CheR-type methyltransferase domain is found at 1-262; the sequence is MIYSDAGIFL…GITTYRYTTK (262 aa). Residues N60, T62, R66, E104, D130, 188-189, and 205-206 contribute to the S-adenosyl-L-methionine site; these read NL and RN.

It carries out the reaction L-glutamyl-[protein] + S-adenosyl-L-methionine = [protein]-L-glutamate 5-O-methyl ester + S-adenosyl-L-homocysteine. Functionally, methylation of the membrane-bound methyl-accepting chemotaxis proteins (MCP) to form gamma-glutamyl methyl ester residues in MCP. The chain is Probable chemotaxis protein methyltransferase (cheRch1) from Rhizobium etli (strain ATCC 51251 / DSM 11541 / JCM 21823 / NBRC 15573 / CFN 42).